The primary structure comprises 446 residues: Adenylosuccinate synthetase (446 aa).

Residues 21–27 (GDEGKGK) and 49–51 (GHT) each bind GTP. Catalysis depends on aspartate 22, which acts as the Proton acceptor. Aspartate 22 and glycine 49 together coordinate Mg(2+). Residues 22–25 (DEGK), 47–50 (NAGH), threonine 141, arginine 155, glutamine 236, threonine 251, and arginine 319 each bind IMP. The Proton donor role is filled by histidine 50. A substrate-binding site is contributed by 315–321 (VTTGRSR). GTP is bound by residues arginine 321, 347-349 (KLD), and 429-431 (STS).

This sequence belongs to the adenylosuccinate synthetase family. As to quaternary structure, homodimer. Mg(2+) is required as a cofactor.

It localises to the cytoplasm. The enzyme catalyses IMP + L-aspartate + GTP = N(6)-(1,2-dicarboxyethyl)-AMP + GDP + phosphate + 2 H(+). It participates in purine metabolism; AMP biosynthesis via de novo pathway; AMP from IMP: step 1/2. In terms of biological role, plays an important role in the de novo pathway of purine nucleotide biosynthesis. Catalyzes the first committed step in the biosynthesis of AMP from IMP. The chain is Adenylosuccinate synthetase from Polaromonas naphthalenivorans (strain CJ2).